The following is a 242-amino-acid chain: Aspartate/glutamate leucyltransferase (242 aa).

It belongs to the R-transferase family. Bpt subfamily.

It is found in the cytoplasm. The catalysed reaction is N-terminal L-glutamyl-[protein] + L-leucyl-tRNA(Leu) = N-terminal L-leucyl-L-glutamyl-[protein] + tRNA(Leu) + H(+). It carries out the reaction N-terminal L-aspartyl-[protein] + L-leucyl-tRNA(Leu) = N-terminal L-leucyl-L-aspartyl-[protein] + tRNA(Leu) + H(+). Functions in the N-end rule pathway of protein degradation where it conjugates Leu from its aminoacyl-tRNA to the N-termini of proteins containing an N-terminal aspartate or glutamate. This Alcanivorax borkumensis (strain ATCC 700651 / DSM 11573 / NCIMB 13689 / SK2) protein is Aspartate/glutamate leucyltransferase.